The sequence spans 1050 residues: Antibiotic efflux pump membrane transporter ArpB (1050 aa).

12 helical membrane passes run 10–30 (IFAW…ILKL), 339–359 (GVIH…YLFL), 370–390 (MTVP…GFSI), 393–413 (LTMF…IVVV), 440–460 (GALV…AFFG), 472–492 (ITIV…TPAL), 539–559 (VPFL…FARI), 871–891 (MPAL…ALYE), 893–913 (WSIP…ALIA), 923–943 (VYFL…AILI), 972–992 (IIMT…ASGA), and 1004–1024 (VIGG…LFFV).

It belongs to the resistance-nodulation-cell division (RND) (TC 2.A.6) family.

The protein resides in the cell inner membrane. Its function is as follows. The inner membrane transporter component of an antibiotic efflux pump. Confers resistance to numerous structurally unrelated antibiotics such as carbenicillin, chloramphenicol, erythromycin, novobiocin, streptomycin and tetracycline. Is not involved in organic solvent efflux. The protein is Antibiotic efflux pump membrane transporter ArpB (arpB) of Pseudomonas putida (Arthrobacter siderocapsulatus).